A 426-amino-acid polypeptide reads, in one-letter code: Growth-regulating factor 9 (426 aa).

The 36-residue stretch at 92–127 (PFTPSQWMELEHQALIYKYLNAKAPIPSSLLISISK) folds into the QLQ domain. In terms of domain architecture, WRC spans 151-195 (DPEPGRCRRTDGKKWRCSKEAMADHKYCERHINRNRHRSRKPVEN). 2 consecutive short sequence motifs (bipartite nuclear localization signal) follow at residues 156-166 (RCRRTDGKKWR) and 184-191 (RNRHRSRK). Residues 184–222 (RNRHRSRKPVENQSRKTVKETPCAGSLPSSVGQGSFKKA) form a disordered region. Over residues 191–202 (KPVENQSRKTVK) the composition is skewed to basic and acidic residues.

It belongs to the GRF family.

Its subcellular location is the nucleus. Functionally, transcription activator that plays a regulatory role in gibberellin-induced stem elongation. The protein is Growth-regulating factor 9 (GRF9) of Oryza sativa subsp. japonica (Rice).